The sequence spans 322 residues: Rhomboid-like protein 16, chloroplastic (322 aa).

The transit peptide at 1 to 52 (MHAIFCRRVAVGCSSPQLTKLVTKQASQSRHSLSHLLPFDLSSRFVPPYVVS) directs the protein to the chloroplast. A run of 6 helical transmembrane segments spans residues 110-130 (WINGANGVVFGLVIANAAVFT), 166-186 (FSHVGATHIILNMMGLCYFGA), 201-221 (YFAGALGGSVFFLSSHALSVI), 238-258 (IGKLGANGPVYAITLLDMLLY), 265-285 (FGLMLRVPVFAGIYSLGLNII), and 295-315 (TLTSLDQLGGVVVAVIAWARI).

This sequence belongs to the peptidase S54 family.

The protein resides in the plastid. It localises to the chloroplast membrane. Its function is as follows. Rhomboid-type serine protease that catalyzes intramembrane proteolysis. May cleave the plastid translocon component Tic40. The sequence is that of Rhomboid-like protein 16, chloroplastic from Arabidopsis thaliana (Mouse-ear cress).